A 280-amino-acid polypeptide reads, in one-letter code: 2,3,4,5-tetrahydropyridine-2,6-dicarboxylate N-succinyltransferase (280 aa).

Residues R107 and D144 each contribute to the substrate site.

It belongs to the transferase hexapeptide repeat family. In terms of assembly, homotrimer.

The protein localises to the cytoplasm. It carries out the reaction (S)-2,3,4,5-tetrahydrodipicolinate + succinyl-CoA + H2O = (S)-2-succinylamino-6-oxoheptanedioate + CoA. Its pathway is amino-acid biosynthesis; L-lysine biosynthesis via DAP pathway; LL-2,6-diaminopimelate from (S)-tetrahydrodipicolinate (succinylase route): step 1/3. The chain is 2,3,4,5-tetrahydropyridine-2,6-dicarboxylate N-succinyltransferase from Paramagnetospirillum magneticum (strain ATCC 700264 / AMB-1) (Magnetospirillum magneticum).